A 241-amino-acid polypeptide reads, in one-letter code: Octanoyltransferase (241 aa).

The BPL/LPL catalytic domain occupies 43 to 228; that stretch reads AETPDEIWLV…CLTANLDGSP (186 aa). Residues 83 to 90, 159 to 161, and 172 to 174 contribute to the substrate site; these read RGGQITYH, ALG, and GVS. Cys-190 functions as the Acyl-thioester intermediate in the catalytic mechanism.

Belongs to the LipB family.

The protein localises to the cytoplasm. The catalysed reaction is octanoyl-[ACP] + L-lysyl-[protein] = N(6)-octanoyl-L-lysyl-[protein] + holo-[ACP] + H(+). It participates in protein modification; protein lipoylation via endogenous pathway; protein N(6)-(lipoyl)lysine from octanoyl-[acyl-carrier-protein]: step 1/2. Catalyzes the transfer of endogenously produced octanoic acid from octanoyl-acyl-carrier-protein onto the lipoyl domains of lipoate-dependent enzymes. Lipoyl-ACP can also act as a substrate although octanoyl-ACP is likely to be the physiological substrate. This is Octanoyltransferase from Paraburkholderia xenovorans (strain LB400).